We begin with the raw amino-acid sequence, 256 residues long: Small ribosomal subunit protein uS2 (256 aa).

It belongs to the universal ribosomal protein uS2 family.

This chain is Small ribosomal subunit protein uS2, found in Acidiphilium cryptum (strain JF-5).